A 377-amino-acid chain; its full sequence is Methylthioribose-1-phosphate isomerase (377 aa).

The Proton donor role is filled by D254.

This sequence belongs to the eIF-2B alpha/beta/delta subunits family. MtnA subfamily.

It localises to the cytoplasm. The protein resides in the nucleus. It carries out the reaction 5-(methylsulfanyl)-alpha-D-ribose 1-phosphate = 5-(methylsulfanyl)-D-ribulose 1-phosphate. Its pathway is amino-acid biosynthesis; L-methionine biosynthesis via salvage pathway; L-methionine from S-methyl-5-thio-alpha-D-ribose 1-phosphate: step 1/6. Functionally, catalyzes the interconversion of methylthioribose-1-phosphate (MTR-1-P) into methylthioribulose-1-phosphate (MTRu-1-P). This Aspergillus terreus (strain NIH 2624 / FGSC A1156) protein is Methylthioribose-1-phosphate isomerase (mri1).